A 422-amino-acid chain; its full sequence is 5'-deoxyadenosine deaminase (422 aa).

Zn(2+)-binding residues include His57 and His59. Substrate contacts are provided by Glu86 and His178. His205 contacts Zn(2+). Residues Glu208 and Asp294 each coordinate substrate. Asp294 contributes to the Zn(2+) binding site.

Belongs to the metallo-dependent hydrolases superfamily. MTA/SAH deaminase family. In terms of assembly, homotetramer. Zn(2+) serves as cofactor.

The enzyme catalyses 5'-deoxyadenosine + H2O + H(+) = 5'-deoxyinosine + NH4(+). It catalyses the reaction S-adenosyl-L-homocysteine + H2O + H(+) = S-inosyl-L-homocysteine + NH4(+). The catalysed reaction is S-methyl-5'-thioadenosine + H2O + H(+) = S-methyl-5'-thioinosine + NH4(+). It carries out the reaction adenosine + H2O + H(+) = inosine + NH4(+). Its pathway is amino-acid biosynthesis; S-adenosyl-L-methionine biosynthesis. Functionally, catalyzes the deamination of three SAM-derived enzymatic products, namely 5'-deoxyadenosine, S-adenosyl-L-homocysteine, and 5'-methylthioadenosine, to produce the inosine analogs. Can also deaminate adenosine. The preferred substrate for this enzyme is 5'-deoxyadenosine, but all these substrates are efficiently deaminated. Likely functions in a S-adenosyl-L-methionine (SAM) recycling pathway from S-adenosyl-L-homocysteine (SAH) produced from SAM-dependent methylation reactions. May also be involved in the recycling of 5'-deoxyadenosine, whereupon the 5'-deoxyribose moiety of 5'-deoxyinosine is further metabolized to deoxyhexoses used for the biosynthesis of aromatic amino acids in methanogens. The protein is 5'-deoxyadenosine deaminase of Methanococcus vannielii (strain ATCC 35089 / DSM 1224 / JCM 13029 / OCM 148 / SB).